The chain runs to 234 residues: Orotidine 5'-phosphate decarboxylase (234 aa).

Residues aspartate 14, lysine 36, 63 to 72 (DLKFHDIPNT), threonine 123, arginine 184, glutamine 193, glycine 213, and arginine 214 contribute to the substrate site. The active-site Proton donor is lysine 65.

This sequence belongs to the OMP decarboxylase family. Type 1 subfamily. In terms of assembly, homodimer.

It carries out the reaction orotidine 5'-phosphate + H(+) = UMP + CO2. It functions in the pathway pyrimidine metabolism; UMP biosynthesis via de novo pathway; UMP from orotate: step 2/2. Functionally, catalyzes the decarboxylation of orotidine 5'-monophosphate (OMP) to uridine 5'-monophosphate (UMP). This is Orotidine 5'-phosphate decarboxylase from Psychromonas ingrahamii (strain DSM 17664 / CCUG 51855 / 37).